The primary structure comprises 75 residues: Tetrahydromethanopterin S-methyltransferase subunit F (75 aa).

The helical transmembrane segment at 53-73 threads the bilayer; the sequence is FAGLACGMVFAGVLLVPLLLL.

The protein belongs to the MtrF family. As to quaternary structure, the complex is composed of 8 subunits; MtrA, MtrB, MtrC, MtrD, MtrE, MtrF, MtrG and MtrH.

Its subcellular location is the cell membrane. The catalysed reaction is 5-methyl-5,6,7,8-tetrahydromethanopterin + coenzyme M + 2 Na(+)(in) = 5,6,7,8-tetrahydromethanopterin + methyl-coenzyme M + 2 Na(+)(out). It functions in the pathway one-carbon metabolism; methanogenesis from CO(2); methyl-coenzyme M from 5,10-methylene-5,6,7,8-tetrahydromethanopterin: step 2/2. Functionally, part of a complex that catalyzes the formation of methyl-coenzyme M and tetrahydromethanopterin from coenzyme M and methyl-tetrahydromethanopterin. This is an energy-conserving, sodium-ion translocating step. The polypeptide is Tetrahydromethanopterin S-methyltransferase subunit F (Methanopyrus kandleri (strain AV19 / DSM 6324 / JCM 9639 / NBRC 100938)).